Consider the following 1091-residue polypeptide: ATP-citrate synthase (1091 aa).

The ATP-grasp domain maps to 4-265 (KAISEQTGKE…LDAKSGASLK (262 aa)). 6 residues coordinate ATP: Lys-58, Arg-66, Gly-67, Pro-109, Val-111, and Glu-118. Tyr-131 carries the post-translational modification Phosphotyrosine. Asp-216 serves as a coordination point for ATP. The Mg(2+) site is built by Asp-257, Ser-260, and Ala-262. Phosphoserine is present on Ser-263. Citrate-binding residues include Gly-309, Asn-346, Thr-348, Tyr-364, and Arg-379. Low complexity predominate over residues 442-457 (SGSTSTPAPSRTASFS). The interval 442 to 471 (SGSTSTPAPSRTASFSESRTDEVAPAKKAK) is disordered. Residue Thr-447 is modified to Phosphothreonine. Ser-451 bears the Phosphoserine mark. At Ser-455 the chain carries Phosphoserine; by PKA and PKB/AKT1 or PKB/AKT2 or BCKDK. Residue Ser-459 is modified to Phosphoserine. Residues Lys-530, Lys-536, and Lys-544 each carry the N6-acetyllysine; alternate modification. Glycyl lysine isopeptide (Lys-Gly) (interchain with G-Cter in ubiquitin); alternate cross-links involve residues Lys-530, Lys-536, and Lys-544. Thr-629 is subject to Phosphothreonine. A Phosphoserine modification is found at Ser-653. The residue at position 672 (Tyr-672) is a Phosphotyrosine. Residue His-750 is the Tele-phosphohistidine intermediate of the active site. A CoA-binding site is contributed by 769–779 (LKEAGVFVPRS). Ser-829 carries the phosphoserine modification. N6-acetyllysine is present on residues Lys-938, Lys-958, Lys-968, and Lys-1067. Ser-1090 carries the phosphoserine modification.

The protein in the N-terminal section; belongs to the succinate/malate CoA ligase beta subunit family. In the C-terminal section; belongs to the succinate/malate CoA ligase alpha subunit family. In terms of assembly, homotetramer. Mg(2+) serves as cofactor. In terms of processing, phosphorylated by PKA and GSK3 in a sequential manner; phosphorylation results in activation of its activity. Phosphorylation on Thr-447 and Ser-451 depends on the phosphorylation state of Ser-455. Phosphorylation on Ser-455 is decreased by prior phosphorylation on the other 2 residues. Phosphorylated at Ser-455 by BCKDK and dephosphorylated by protein phosphatase PPM1K. Post-translationally, ISGylated. Acetylated at Lys-530, Lys-536 and Lys-544 by KAT2B/PCAF. Acetylation is promoted by glucose and stabilizes the protein, probably by preventing ubiquitination at the same sites. Acetylation promotes de novo lipid synthesis. Deacetylated by SIRT2. In terms of processing, ubiquitinated at Lys-530, Lys-536 and Lys-544 by the BCR(KLHL25) E3 ubiquitin ligase complex and UBR4, leading to its degradation. Ubiquitination is probably inhibited by acetylation at same site. BCR(KLHL25)-mediated degradation of ACLY promotes fatty acid oxidation and is required for differentiation of inducible regulatory T (iTreg) cells.

It is found in the cytoplasm. Its subcellular location is the cytosol. The catalysed reaction is oxaloacetate + acetyl-CoA + ADP + phosphate = citrate + ATP + CoA. Phosphorylation results in activation of its activity. Glucose 6-phosphate, fructose 6-phosphate, fructose 2,6-bisphosphate, ribulose 5-phosphate, and fructose 1,6-bisphosphate also act as activators. Catalyzes the cleavage of citrate into oxaloacetate and acetyl-CoA, the latter serving as common substrate in multiple biochemical reactions in protein, carbohydrate and lipid metabolism. The protein is ATP-citrate synthase (ACLY) of Bos taurus (Bovine).